The sequence spans 1479 residues: Type VII secretion system protein EssC (1479 aa).

Topologically, residues 1–229 are cytoplasmic; it reads MHKLIIKYNK…RPPQPIQKNN (229 aa). Residues 230-252 form a helical membrane-spanning segment; that stretch reads TVIWRSIIPPLVMIALTVVIFLV. The Extracellular portion of the chain corresponds to 253–256; the sequence is RPIG. Residues 257-279 form a helical membrane-spanning segment; the sequence is IYILMMIGMSTVTIVFGITTYFS. The Cytoplasmic segment spans residues 280–1479; sequence EKKKYNKDVE…QAYQKIRWFK (1200 aa). FtsK domains are found at residues 652-846 and 997-1183; these read DDIL…QDSN and QGPM…SEVS. ATP is bound by residues 672–679 and 1014–1021; these read GTTGSGKS and GSPGYGRT.

It belongs to the EssC family. In terms of assembly, homooligomer. Interacts with EsaE.

The protein localises to the cell membrane. Component of the type VII secretion system (Ess). Required for the secretion of substrates including EsxA and EsxB. However, unable to support secretion of the substrate protein EsxC. This Staphylococcus aureus (strain Mu50 / ATCC 700699) protein is Type VII secretion system protein EssC.